The sequence spans 135 residues: UPF0299 membrane protein PC1_1498 (135 aa).

A run of 4 helical transmembrane segments spans residues 5-25 (FIVC…LLAG), 30-50 (ALLP…FTLL), 63-83 (GCHL…VGVM), and 93-113 (FGPI…VVGF).

It belongs to the UPF0299 family.

Its subcellular location is the cell inner membrane. This Pectobacterium carotovorum subsp. carotovorum (strain PC1) protein is UPF0299 membrane protein PC1_1498.